We begin with the raw amino-acid sequence, 241 residues long: Regulatory protein VirG (241 aa).

The region spanning 3 to 117 is the Response regulatory domain; it reads HVLVIDDDVA…EFLARIRVAL (115 aa). 4-aspartylphosphate is present on D52. Residues 129-229 constitute a DNA-binding region (ompR/PhoB-type); the sequence is RRSFYFADWT…ARGAGYFFDA (101 aa).

Phosphorylated by wide host range (WHR) VirA protein.

The protein localises to the cytoplasm. Its function is as follows. VirG is required for the positive regulation of at least two vir loci encoded by the Ri plasmid of A.rhizogenes. This Rhizobium rhizogenes (Agrobacterium rhizogenes) protein is Regulatory protein VirG (virG).